Consider the following 190-residue polypeptide: Imidazoleglycerol-phosphate dehydratase (190 aa).

The protein belongs to the imidazoleglycerol-phosphate dehydratase family.

The protein localises to the cytoplasm. It catalyses the reaction D-erythro-1-(imidazol-4-yl)glycerol 3-phosphate = 3-(imidazol-4-yl)-2-oxopropyl phosphate + H2O. It functions in the pathway amino-acid biosynthesis; L-histidine biosynthesis; L-histidine from 5-phospho-alpha-D-ribose 1-diphosphate: step 6/9. The protein is Imidazoleglycerol-phosphate dehydratase of Nitratiruptor sp. (strain SB155-2).